The sequence spans 151 residues: Protein ripply1 (151 aa).

The short motif at 57-60 (WRPW) is the WRPW motif element. Residues 96-131 (HPVRLFWPKSRSFDYLYSAGEILLQNFPVQATINLY) are ripply homology domain. The tract at residues 130–151 (LYEDSDSEEEEEDEEQEDEEEK) is disordered. Acidic residues predominate over residues 132–151 (EDSDSEEEEEDEEQEDEEEK).

The protein belongs to the ripply family.

The protein localises to the nucleus. Functionally, plays a role in somitogenesis. Essential for transcriptional repression of the segmental patterning genes, thus terminating the segmentation program in the presomitic mesoderm, and also required for the maintenance of rostrocaudal polarity in somites. This is Protein ripply1 from Homo sapiens (Human).